We begin with the raw amino-acid sequence, 212 residues long: uncharacterized protein (212 aa).

Residues 29-146 (KGKAGEKLVK…AAFHPKCSLK (118 aa)) enclose the NERD domain.

This is an uncharacterized protein from Bacillus anthracis.